A 239-amino-acid chain; its full sequence is Ribonuclease PH (239 aa).

Residues Arg-86 and 124-126 (GTR) contribute to the phosphate site.

This sequence belongs to the RNase PH family. In terms of assembly, homohexameric ring arranged as a trimer of dimers.

The enzyme catalyses tRNA(n+1) + phosphate = tRNA(n) + a ribonucleoside 5'-diphosphate. Functionally, phosphorolytic 3'-5' exoribonuclease that plays an important role in tRNA 3'-end maturation. Removes nucleotide residues following the 3'-CCA terminus of tRNAs; can also add nucleotides to the ends of RNA molecules by using nucleoside diphosphates as substrates, but this may not be physiologically important. Probably plays a role in initiation of 16S rRNA degradation (leading to ribosome degradation) during starvation. This chain is Ribonuclease PH, found in Marinomonas sp. (strain MWYL1).